The chain runs to 378 residues: D-alanine--D-alanine ligase (378 aa).

An ATP-grasp domain is found at 149–374; sequence KVLLAAAGIP…YTDLITKLIE (226 aa). An ATP-binding site is contributed by 189–247; it reads EAGLQYPLFVKPSRAGSSFGVTKVEHEGDAAELAAAVYEASRHDWRILVEQGIDAREIE. 3 residues coordinate Mg(2+): Asp-328, Glu-341, and Asn-343.

This sequence belongs to the D-alanine--D-alanine ligase family. Requires Mg(2+) as cofactor. Mn(2+) serves as cofactor.

It localises to the cytoplasm. It catalyses the reaction 2 D-alanine + ATP = D-alanyl-D-alanine + ADP + phosphate + H(+). The protein operates within cell wall biogenesis; peptidoglycan biosynthesis. Its function is as follows. Cell wall formation. The sequence is that of D-alanine--D-alanine ligase from Bifidobacterium adolescentis (strain ATCC 15703 / DSM 20083 / NCTC 11814 / E194a).